A 428-amino-acid polypeptide reads, in one-letter code: Flotillin-2 (428 aa).

Glycine 2 carries the N-myristoyl glycine lipid modification. A lipid anchor (S-palmitoyl cysteine; by ZDHHC5) is attached at cysteine 4. The S-palmitoyl cysteine moiety is linked to residue cysteine 19. Cysteine 20 is lipidated: S-palmitoyl cysteine; by ZDHHC5. At serine 405 the chain carries Phosphoserine.

This sequence belongs to the band 7/mec-2 family. Flotillin subfamily. As to quaternary structure, heterooligomeric complex of flotillin-1 and flotillin-2 and caveolin-1 and caveolin-2. Interacts with ECPAS. ZDHHC5-catalyzed palmitoylation may be required for the formation of higher-order complexes and for neurite outgrowth in cultured neural stem cells. As to expression, expressed in many tissues, including suprabasal epidermis, hair follicles, heart, lung, thymus, spleen, liver, kidney and brain. Not expressed in skeletal muscle.

It is found in the cell membrane. The protein localises to the membrane. Its subcellular location is the caveola. The protein resides in the endosome. Functionally, may act as a scaffolding protein within caveolar membranes, functionally participating in formation of caveolae or caveolae-like vesicles. May be involved in epidermal cell adhesion and epidermal structure and function. This is Flotillin-2 (Flot2) from Mus musculus (Mouse).